We begin with the raw amino-acid sequence, 484 residues long: UDP-N-acetylmuramoyl-L-alanyl-D-glutamate--2,6-diaminopimelate ligase (484 aa).

S29 provides a ligand contact to UDP-N-acetyl-alpha-D-muramoyl-L-alanyl-D-glutamate. An ATP-binding site is contributed by 108–114 (GTSGKTS). Residues 150 to 151 (TT), S177, Q183, and R185 contribute to the UDP-N-acetyl-alpha-D-muramoyl-L-alanyl-D-glutamate site. Position 217 is an N6-carboxylysine (K217). Meso-2,6-diaminopimelate contacts are provided by residues R381, 405–408 (DNPR), G453, and E457. Residues 405 to 408 (DNPR) carry the Meso-diaminopimelate recognition motif motif.

It belongs to the MurCDEF family. MurE subfamily. Requires Mg(2+) as cofactor. Carboxylation is probably crucial for Mg(2+) binding and, consequently, for the gamma-phosphate positioning of ATP.

It is found in the cytoplasm. The enzyme catalyses UDP-N-acetyl-alpha-D-muramoyl-L-alanyl-D-glutamate + meso-2,6-diaminopimelate + ATP = UDP-N-acetyl-alpha-D-muramoyl-L-alanyl-gamma-D-glutamyl-meso-2,6-diaminopimelate + ADP + phosphate + H(+). It functions in the pathway cell wall biogenesis; peptidoglycan biosynthesis. In terms of biological role, catalyzes the addition of meso-diaminopimelic acid to the nucleotide precursor UDP-N-acetylmuramoyl-L-alanyl-D-glutamate (UMAG) in the biosynthesis of bacterial cell-wall peptidoglycan. This chain is UDP-N-acetylmuramoyl-L-alanyl-D-glutamate--2,6-diaminopimelate ligase, found in Mesorhizobium japonicum (strain LMG 29417 / CECT 9101 / MAFF 303099) (Mesorhizobium loti (strain MAFF 303099)).